The sequence spans 641 residues: Tegument protein UL35 (641 aa).

Disordered stretches follow at residues 353-373 (ERGEFGDEDEEQENDGEPREA), 500-572 (ASSS…PRQR), and 587-641 (AYSH…LRHL). A compositionally biased stretch (acidic residues) spans 358-367 (GDEDEEQEND). Residues 500–563 (ASSSSASSSS…LSGSHGISSA (64 aa)) are compositionally biased toward low complexity. A compositionally biased stretch (basic residues) spans 589 to 599 (SHHRRHRRRRS). A compositionally biased stretch (basic and acidic residues) spans 632 to 641 (DDLAENLRHL).

It belongs to the herpesviridae pp85 family. As to quaternary structure, interacts with UL82. Interacts with isoform UL35A. Interacts with host UBP7; this interaction significantly inhibits the ability of USP7 to form nuclear bodies. Interacts with host DCAF1 (via C-terminus). Interacts with host SNX5; this interaction allows proper gB localization during viral assembly. Interacts with host TBK1; this interaction prevents type I interferon production. Interacts with UL82. Interacts with isoform UL35. Interacts with host UBP7; this interaction significantly inhibits the ability of USP7 to form nuclear bodies. Interacts with host SNX5; this interaction allows proper gB localization during viral assembly.

The protein resides in the virion tegument. It localises to the host nucleus. It is found in the host cytoplasm. Its function is as follows. Plays important role in immediate-early gene expression through interaction with UL82. Forms nuclear bodies in host nucleus, independently of PML. In turn, UL35 nuclear bodies associate with and remodel PML bodies. Through interaction with host DCAF1, causes cells to accumulate in the G2 phase of the cell cycle by inducing a DNA damage response. Regulates viral assembly by controlling the localization of the essential gB through regulation of a retrograde transport pathway. This modulation occurs via binding and inhibition of host sorting nexin 5/SNX5. Also plays a role in the inhibition of pattern recognition receptor-mediated type I interferon signaling at the level of TBK1. In terms of biological role, promotes cytoplasmic UL82 accumulation and inhibits UL35-containing nuclear bodies formation. Regulates viral assembly by controlling the localization of the essential gB through regulation of a retrograde transport pathway. This modulation occurs via binding and inhibition of host sorting nexin 5/SNX5. This chain is Tegument protein UL35 (UL35), found in Homo sapiens (Human).